Here is a 318-residue protein sequence, read N- to C-terminus: Dihydroorotate dehydrogenase B (NAD(+)), catalytic subunit (318 aa).

FMN-binding positions include Ser-19 and 43 to 44 (KT). Residues Lys-43, 69–73 (NAMGL), and Asn-125 contribute to the substrate site. Asn-125 is a binding site for FMN. Cys-128 (nucleophile) is an active-site residue. Lys-164 and Val-192 together coordinate FMN. 193–194 (NT) provides a ligand contact to substrate. FMN is bound by residues Gly-219, 247–248 (GG), and 269–270 (AT).

Belongs to the dihydroorotate dehydrogenase family. Type 1 subfamily. Heterotetramer of 2 PyrK and 2 PyrD type B subunits. FMN serves as cofactor.

The protein resides in the cytoplasm. It catalyses the reaction (S)-dihydroorotate + NAD(+) = orotate + NADH + H(+). The protein operates within pyrimidine metabolism; UMP biosynthesis via de novo pathway; orotate from (S)-dihydroorotate (NAD(+) route): step 1/1. Its function is as follows. Catalyzes the conversion of dihydroorotate to orotate with NAD(+) as electron acceptor. In Methanopyrus kandleri (strain AV19 / DSM 6324 / JCM 9639 / NBRC 100938), this protein is Dihydroorotate dehydrogenase B (NAD(+)), catalytic subunit (pyrD).